A 579-amino-acid polypeptide reads, in one-letter code: XK-related protein 7 (579 aa).

Low complexity predominate over residues 1–18 (MAAKSDGAAASASPDPEG). The segment at 1–40 (MAAKSDGAAASASPDPEGAAGGARGSAGGRGEAAAAAGPP) is disordered. Gly residues predominate over residues 19-31 (AAGGARGSAGGRG). The next 2 helical transmembrane spans lie at 59-79 (WVLC…WLAA) and 89-109 (YFSL…LLSF). A disordered region spans residues 146–165 (GAFRTKEGSPEPGPQPAPSS). 5 helical membrane passes run 260 to 280 (LLPA…LASY), 314 to 334 (GLAF…FIVA), 355 to 375 (WEEI…WFNV), 384 to 404 (MTLY…FWYS), and 415 to 435 (LIMV…MCVY). Positions 466 to 510 (ADAITSPPRSLPRTTGAERDGASAGERAGTPTPPVFQVRPGLPPT) are disordered.

The protein belongs to the XK family.

The protein localises to the cell membrane. This Homo sapiens (Human) protein is XK-related protein 7.